The chain runs to 261 residues: Fructoselysine 6-kinase (261 aa).

Belongs to the carbohydrate kinase PfkB family. Monomer.

The catalysed reaction is N(6)-(D-fructosyl)-L-lysine + ATP = N(6)-(6-phospho-D-fructosyl)-L-lysine + ADP + H(+). It functions in the pathway carbohydrate metabolism; fructoselysine degradation; D-glucose 6-phosphate and lysine from fructoselysine: step 1/2. Catalyzes the ATP-dependent phosphorylation of fructoselysine to fructoselysine 6-phosphate. Functions in a fructoselysine degradation pathway that allows E.coli to grow on fructoselysine or psicoselysine. To a much lesser extenst, is also able to phosphorylate psicoselysine. This Escherichia coli (strain K12) protein is Fructoselysine 6-kinase.